A 56-amino-acid chain; its full sequence is Small ribosomal subunit protein uS14 (56 aa).

Residues cysteine 21, cysteine 24, cysteine 39, and cysteine 42 each contribute to the Zn(2+) site.

Belongs to the universal ribosomal protein uS14 family. Component of the small ribosomal subunit. Mature ribosomes consist of a small (40S) and a large (60S) subunit. The 40S subunit contains about 32 different proteins and 1 molecule of RNA (18S). The 60S subunit contains 45 different proteins and 3 molecules of RNA (25S, 5.8S and 5S). Zn(2+) serves as cofactor.

It is found in the cytoplasm. In terms of biological role, component of the ribosome, a large ribonucleoprotein complex responsible for the synthesis of proteins in the cell. The small ribosomal subunit (SSU) binds messenger RNAs (mRNAs) and translates the encoded message by selecting cognate aminoacyl-transfer RNA (tRNA) molecules. The large subunit (LSU) contains the ribosomal catalytic site termed the peptidyl transferase center (PTC), which catalyzes the formation of peptide bonds, thereby polymerizing the amino acids delivered by tRNAs into a polypeptide chain. The nascent polypeptides leave the ribosome through a tunnel in the LSU and interact with protein factors that function in enzymatic processing, targeting, and the membrane insertion of nascent chains at the exit of the ribosomal tunnel. This is Small ribosomal subunit protein uS14 from Candida albicans (strain SC5314 / ATCC MYA-2876) (Yeast).